Reading from the N-terminus, the 158-residue chain is Snaclec alboaggregin-D subunit alpha (158 aa).

The N-terminal stretch at 1 to 23 is a signal peptide; the sequence is MGRFIFGSFGLLVVFLSLSGTGA. 3 disulfide bridges follow: cysteine 27/cysteine 38, cysteine 55/cysteine 152, and cysteine 127/cysteine 144. A C-type lectin domain is found at 34 to 153; sequence YDRYCYQAFS…CAELNPFICK (120 aa).

It belongs to the snaclec family. Tetramer of heterodimers of alpha and beta subunits (alphabeta)(4); disulfide-linked. Expressed by the venom gland.

The protein localises to the secreted. Functionally, snaclec that induces human platelet aggregation in the absence of any cofactor with the EC(50) of 0.25 nM and causes tyrosine phosphorylation in human platelets. Antibodies against either platelet GPIbalpha (GP1BA) or GPVI (GP6) inhibit alboaggregin D-induced platelet aggregation. Only the combination of these two antibodies completely inhibit aggregation, suggesting that it acts through both GPIbalpha (GP1BA) and GPVI (GP6). This is Snaclec alboaggregin-D subunit alpha from Trimeresurus albolabris (White-lipped pit viper).